A 336-amino-acid polypeptide reads, in one-letter code: Dihydroorotate dehydrogenase (quinone) (336 aa).

Residues 62–66 (AGLDK) and Thr-86 contribute to the FMN site. Residue Lys-66 participates in substrate binding. A substrate-binding site is contributed by 111 to 115 (NRMGF). Residues Asn-139 and Asn-172 each coordinate FMN. Residue Asn-172 coordinates substrate. Ser-175 functions as the Nucleophile in the catalytic mechanism. Asn-177 provides a ligand contact to substrate. Residues Lys-217 and Thr-245 each contribute to the FMN site. 246 to 247 (NT) serves as a coordination point for substrate. Residues Gly-268, Gly-297, and 318–319 (FS) each bind FMN.

Belongs to the dihydroorotate dehydrogenase family. Type 2 subfamily. In terms of assembly, monomer. FMN is required as a cofactor.

The protein resides in the cell membrane. It catalyses the reaction (S)-dihydroorotate + a quinone = orotate + a quinol. Its pathway is pyrimidine metabolism; UMP biosynthesis via de novo pathway; orotate from (S)-dihydroorotate (quinone route): step 1/1. Functionally, catalyzes the conversion of dihydroorotate to orotate with quinone as electron acceptor. The sequence is that of Dihydroorotate dehydrogenase (quinone) from Photorhabdus laumondii subsp. laumondii (strain DSM 15139 / CIP 105565 / TT01) (Photorhabdus luminescens subsp. laumondii).